The primary structure comprises 265 residues: Cytochrome c oxidase subunit 3 (265 aa).

A run of 7 helical transmembrane segments spans residues 16 to 36 (PWPL…VMYM), 41 to 61 (GGGT…FVWW), 85 to 105 (GIIL…WAFF), 138 to 158 (LILL…LAGL), 162 to 182 (AVYA…FQGI), 200 to 220 (FFLA…FLII), and 242 to 262 (AFYW…IYWW).

This sequence belongs to the cytochrome c oxidase subunit 3 family. Component of the cytochrome c oxidase (complex IV, CIV), a multisubunit enzyme composed of a catalytic core of 3 subunits and several supernumerary subunits. The complex exists as a monomer or a dimer and forms supercomplexes (SCs) in the inner mitochondrial membrane with ubiquinol-cytochrome c oxidoreductase (cytochrome b-c1 complex, complex III, CIII).

It is found in the mitochondrion inner membrane. The catalysed reaction is 4 Fe(II)-[cytochrome c] + O2 + 8 H(+)(in) = 4 Fe(III)-[cytochrome c] + 2 H2O + 4 H(+)(out). Component of the cytochrome c oxidase, the last enzyme in the mitochondrial electron transport chain which drives oxidative phosphorylation. The respiratory chain contains 3 multisubunit complexes succinate dehydrogenase (complex II, CII), ubiquinol-cytochrome c oxidoreductase (cytochrome b-c1 complex, complex III, CIII) and cytochrome c oxidase (complex IV, CIV), that cooperate to transfer electrons derived from NADH and succinate to molecular oxygen, creating an electrochemical gradient over the inner membrane that drives transmembrane transport and the ATP synthase. Cytochrome c oxidase is the component of the respiratory chain that catalyzes the reduction of oxygen to water. Electrons originating from reduced cytochrome c in the intermembrane space (IMS) are transferred via the dinuclear copper A center (CU(A)) of subunit 2 and heme A of subunit 1 to the active site in subunit 1, a binuclear center (BNC) formed by heme A3 and copper B (CU(B)). The BNC reduces molecular oxygen to 2 water molecules using 4 electrons from cytochrome c in the IMS and 4 protons from the mitochondrial matrix. In Marchantia polymorpha (Common liverwort), this protein is Cytochrome c oxidase subunit 3 (COX3).